A 126-amino-acid polypeptide reads, in one-letter code: C-type natriuretic peptide (126 aa).

Positions 1 to 23 (MHLSQLIACALLLALLSLRPSEA) are cleaved as a signal peptide. The interval 20-73 (PSEAKPGTPPKVPRTPPGEELADSQAAGGNQKKGDKTPGSGGANLKGDRSRLLR) is disordered. Positions 24–73 (KPGTPPKVPRTPPGEELADSQAAGGNQKKGDKTPGSGGANLKGDRSRLLR) are excised as a propeptide. Positions 26–35 (GTPPKVPRTP) are enriched in pro residues. Residues C110 and C126 are joined by a disulfide bond.

Belongs to the natriuretic peptide family. In terms of processing, degraded by IDE (in vitro).

It localises to the secreted. In terms of biological role, hormone which plays a role in endochondral ossification through regulation of cartilaginous growth plate chondrocytes proliferation and differentiation. May also be vasoactive and natriuretic. Acts by specifically binding and stimulating NPR2 to produce cGMP. Binds the clearance receptor NPR3. In Mus musculus (Mouse), this protein is C-type natriuretic peptide (Nppc).